A 235-amino-acid polypeptide reads, in one-letter code: Exosome complex component Rrp4 (235 aa).

The region spanning 67–139 is the S1 motif domain; it reads GDVVIGLIQS…KTRSPLLTVQ (73 aa). A KH domain is found at 149-205; it reads GKIVEISPAKVPRVIGRKMSMLKTLEEKTECKIFVARNGRIHLECPNEDLEAIAVMA.

The protein belongs to the RRP4 family. Component of the archaeal exosome complex. Forms a trimer of Rrp4 and/or Csl4 subunits. The trimer associates with a hexameric ring-like arrangement composed of 3 Rrp41-Rrp42 heterodimers.

Its subcellular location is the cytoplasm. In terms of biological role, non-catalytic component of the exosome, which is a complex involved in RNA degradation. Increases the RNA binding and the efficiency of RNA degradation. Confers strong poly(A) specificity to the exosome. The sequence is that of Exosome complex component Rrp4 from Aeropyrum pernix (strain ATCC 700893 / DSM 11879 / JCM 9820 / NBRC 100138 / K1).